We begin with the raw amino-acid sequence, 2180 residues long: DNA polymerase epsilon catalytic subunit A (2180 aa).

Residues Cys2067, Cys2070, Cys2089, and Cys2092 each coordinate Zn(2+). Residues 2067–2092 (CENCAYFSDLDICMSDLRSMFKCSKC) form a CysA-type zinc finger. Residues Cys2123, Cys2126, Cys2138, and Cys2140 each coordinate [4Fe-4S] cluster. Residues 2123-2140 (CAKCRKIKSDTMSAYCTC) carry the CysB motif motif.

It belongs to the DNA polymerase type-B family. In terms of assembly, heterotetramer. Consists of 4 subunits: POL2, DPB2, DPB3 and DPB4. It depends on [4Fe-4S] cluster as a cofactor.

Its subcellular location is the nucleus. It carries out the reaction DNA(n) + a 2'-deoxyribonucleoside 5'-triphosphate = DNA(n+1) + diphosphate. Its function is as follows. DNA polymerase II participates in chromosomal DNA replication. In Eremothecium gossypii (strain ATCC 10895 / CBS 109.51 / FGSC 9923 / NRRL Y-1056) (Yeast), this protein is DNA polymerase epsilon catalytic subunit A (POL2).